Reading from the N-terminus, the 434-residue chain is Homoserine dehydrogenase (434 aa).

The NADPH site is built by Thr13 and Val14. Positions 14, 33, and 43 each coordinate NAD(+). Residue Val14 participates in NADP(+) binding. NADPH is bound at residue Arg45. The NADP(+) site is built by Arg45, Arg46, and Lys103. Lys103 serves as a coordination point for NADPH. The Na(+) site is built by Glu127, Val130, Gly132, and Ile134. Gly185 and Glu188 together coordinate NADP(+). L-homoserine contacts are provided by Glu188 and Asp199. The active-site Proton donor is the Lys203. NADPH is bound at residue Gly300. Position 300 (Gly300) interacts with NAD(+). Gly300 is a binding site for NADP(+). In terms of domain architecture, ACT spans Tyr353–Arg429.

The protein belongs to the homoserine dehydrogenase family. The cofactor is a metal cation.

It carries out the reaction L-homoserine + NADP(+) = L-aspartate 4-semialdehyde + NADPH + H(+). The enzyme catalyses L-homoserine + NAD(+) = L-aspartate 4-semialdehyde + NADH + H(+). Its pathway is amino-acid biosynthesis; L-methionine biosynthesis via de novo pathway; L-homoserine from L-aspartate: step 3/3. It participates in amino-acid biosynthesis; L-threonine biosynthesis; L-threonine from L-aspartate: step 3/5. Its activity is regulated as follows. Feedback inhibition by threonine. In terms of biological role, catalyzes the conversion of L-aspartate-beta-semialdehyde (L-Asa) to L-homoserine (L-Hse), the third step in the biosynthesis of threonine and methionine from aspartate. The protein is Homoserine dehydrogenase (hom) of Pseudomonas aeruginosa (strain ATCC 15692 / DSM 22644 / CIP 104116 / JCM 14847 / LMG 12228 / 1C / PRS 101 / PAO1).